The primary structure comprises 515 residues: Hyccin (515 aa).

Residues Ser-358–Lys-378 show a composition bias toward low complexity. Disordered regions lie at residues Ser-358–Ala-410 and Thr-491–Asp-515. A compositionally biased stretch (basic and acidic residues) spans Ala-389–Ser-403. Positions Lys-498 to Asp-515 are enriched in polar residues.

The protein belongs to the Hyccin family. As to quaternary structure, component of a phosphatidylinositol 4-kinase (PI4K) complex.

The protein resides in the cytoplasm. Its subcellular location is the cytosol. It is found in the cell membrane. Component of a complex required to localize phosphatidylinositol 4-kinase (PI4K) to the plasma membrane. The complex acts as a regulator of phosphatidylinositol 4-phosphate (PtdIns(4)P) synthesis. This is Hyccin (HYCC1) from Gallus gallus (Chicken).